Reading from the N-terminus, the 96-residue chain is Large ribosomal subunit protein uL23 (96 aa).

Belongs to the universal ribosomal protein uL23 family. As to quaternary structure, part of the 50S ribosomal subunit. Contacts protein L29, and trigger factor when it is bound to the ribosome.

In terms of biological role, one of the early assembly proteins it binds 23S rRNA. One of the proteins that surrounds the polypeptide exit tunnel on the outside of the ribosome. Forms the main docking site for trigger factor binding to the ribosome. The polypeptide is Large ribosomal subunit protein uL23 (Syntrophus aciditrophicus (strain SB)).